Reading from the N-terminus, the 374-residue chain is Chaperone protein DnaJ (374 aa).

Residues Asp-4–Gly-68 form the J domain. Residues Gly-133 to Thr-215 form a CR-type zinc finger. Residues Cys-146, Cys-149, Cys-163, Cys-166, Cys-189, Cys-192, Cys-203, and Cys-206 each coordinate Zn(2+). CXXCXGXG motif repeat units lie at residues Cys-146–Gly-153, Cys-163–Gly-170, Cys-189–Gly-196, and Cys-203–Gly-210.

Belongs to the DnaJ family. As to quaternary structure, homodimer. Zn(2+) is required as a cofactor.

Its subcellular location is the cytoplasm. Its function is as follows. Participates actively in the response to hyperosmotic and heat shock by preventing the aggregation of stress-denatured proteins and by disaggregating proteins, also in an autonomous, DnaK-independent fashion. Unfolded proteins bind initially to DnaJ; upon interaction with the DnaJ-bound protein, DnaK hydrolyzes its bound ATP, resulting in the formation of a stable complex. GrpE releases ADP from DnaK; ATP binding to DnaK triggers the release of the substrate protein, thus completing the reaction cycle. Several rounds of ATP-dependent interactions between DnaJ, DnaK and GrpE are required for fully efficient folding. Also involved, together with DnaK and GrpE, in the DNA replication of plasmids through activation of initiation proteins. This Cyanothece sp. (strain PCC 7425 / ATCC 29141) protein is Chaperone protein DnaJ.